The primary structure comprises 112 residues: U15-hexatoxin-Hi1a (112 aa).

A signal peptide spans 1–18 (MNTLIAFAVLLLLSTTLG). A propeptide spanning residues 19-73 (DTDDKVSHEEIQERKELSGISEELLLQQLEAVEAALMEKERLEEMEEDGNSREKR) is cleaved from the precursor. Intrachain disulfides connect C74/C88, C81/C93, and C87/C107.

Belongs to the neurotoxin 14 (magi-1) family. 08 (Ltx-4) subfamily. As to expression, expressed by the venom gland.

Its subcellular location is the secreted. Probable ion channel inhibitor. In Hadronyche infensa (Fraser island funnel-web spider), this protein is U15-hexatoxin-Hi1a.